A 441-amino-acid chain; its full sequence is Protein eva-1 homolog C (441 aa).

Residues 1 to 23 (MLLPGPARQPPTPQPVQHPGLRR) are disordered. Residues 1-48 (MLLPGPARQPPTPQPVQHPGLRRQVEPPGQLLRLFYCTVLVCSKEISA) form the signal peptide. The segment covering 7–16 (ARQPPTPQPV) has biased composition (pro residues). At 49-322 (LTDFSGYLTK…AYIRAHPERA (274 aa)) the chain is on the extracellular side. An N-linked (GlcNAc...) asparagine glycan is attached at asparagine 62. In terms of domain architecture, SUEL-type lectin 1 spans 67–159 (ACDGDYLNLQ…KYLLVSFKCQ (93 aa)). Asparagine 165 is a glycosylation site (N-linked (GlcNAc...) asparagine). The SUEL-type lectin 2 domain occupies 168-260 (VCEDQELKLH…KYLTVTYACV (93 aa)). The chain crosses the membrane as a helical span at residues 323–343 (ALLFVSSVCIGLALTLCALVI). Residues 344-441 (RESCAKDFRD…SLPRNMGQFY (98 aa)) lie on the Cytoplasmic side of the membrane. The tract at residues 362 to 391 (VPGSDKVEEDSEDEEEEEDSSESDFPGELS) is disordered. Acidic residues predominate over residues 368 to 383 (VEEDSEDEEEEEDSSE).

The protein belongs to the EVA1 family.

It is found in the cell membrane. Its function is as follows. Binds heparin. This chain is Protein eva-1 homolog C (EVA1C), found in Pan troglodytes (Chimpanzee).